A 162-amino-acid chain; its full sequence is uncharacterized protein (162 aa).

A helical transmembrane segment spans residues L7–F27.

Its subcellular location is the membrane. This is an uncharacterized protein from Methanocaldococcus jannaschii (strain ATCC 43067 / DSM 2661 / JAL-1 / JCM 10045 / NBRC 100440) (Methanococcus jannaschii).